A 178-amino-acid polypeptide reads, in one-letter code: Oligoribonuclease (178 aa).

The Exonuclease domain occupies 7-168 (LIWIDLEMTG…DDIRESIAEL (162 aa)). Tyr-128 is an active-site residue.

It belongs to the oligoribonuclease family.

The protein resides in the cytoplasm. Functionally, 3'-to-5' exoribonuclease specific for small oligoribonucleotides. This is Oligoribonuclease from Francisella tularensis subsp. tularensis (strain FSC 198).